A 176-amino-acid chain; its full sequence is Adenine phosphoribosyltransferase (176 aa).

It belongs to the purine/pyrimidine phosphoribosyltransferase family. As to quaternary structure, homodimer.

Its subcellular location is the cytoplasm. The catalysed reaction is AMP + diphosphate = 5-phospho-alpha-D-ribose 1-diphosphate + adenine. The protein operates within purine metabolism; AMP biosynthesis via salvage pathway; AMP from adenine: step 1/1. Its function is as follows. Catalyzes a salvage reaction resulting in the formation of AMP, that is energically less costly than de novo synthesis. In Borreliella burgdorferi (strain ATCC 35210 / DSM 4680 / CIP 102532 / B31) (Borrelia burgdorferi), this protein is Adenine phosphoribosyltransferase.